The chain runs to 320 residues: Pyrroline-5-carboxylate reductase 2 (320 aa).

Ser-2 carries the post-translational modification N-acetylserine. Residues 6–11 (IGAGQL) and Ser-34 each bind NADP(+). Residues Ala-8, Gln-10, Leu-11, Ser-34, Glu-36, Asn-56, Val-70, Lys-71, and Ala-97 each coordinate NADPH. NADP(+) contacts are provided by residues Asn-56, 69 to 72 (AVKP), and 95 to 97 (CAA). Glu-164 contributes to the L-proline binding site. Asn-230 contacts NADPH. L-proline is bound by residues Ala-237 and Thr-238. Positions 295-305 (PTVSTLTPSSP) are enriched in low complexity. The segment at 295 to 320 (PTVSTLTPSSPGKLLTRSLALGGKKD) is disordered. A Phosphoserine modification is found at Ser-304.

Belongs to the pyrroline-5-carboxylate reductase family. As to quaternary structure, homodecamer; composed of 5 homodimers. Interacts with LTO1. In terms of tissue distribution, detected in erythrocytes (at protein level). Expressed in fetal brain.

It localises to the cytoplasm. The protein localises to the mitochondrion. It catalyses the reaction L-proline + NADP(+) = (S)-1-pyrroline-5-carboxylate + NADPH + 2 H(+). It carries out the reaction L-proline + NAD(+) = (S)-1-pyrroline-5-carboxylate + NADH + 2 H(+). It participates in amino-acid biosynthesis; L-proline biosynthesis; L-proline from L-glutamate 5-semialdehyde: step 1/1. Its activity is regulated as follows. Subject to competitive inhibition by NADP. Was reported not to be inhibited by proline. However other study demonstrated an inhibition by proline. Functionally, oxidoreductase that catalyzes the last step in proline biosynthesis, which corresponds to the reduction of pyrroline-5-carboxylate to L-proline using NAD(P)H. At physiologic concentrations, has higher specific activity in the presence of NADH. Involved in cellular response to oxidative stress. In some cell types, such as erythrocytes, its primary function may be the generation of NADP(+). This is Pyrroline-5-carboxylate reductase 2 from Homo sapiens (Human).